The primary structure comprises 809 residues: Trimethylamine-N-oxide reductase 2 (809 aa).

A signal peptide (tat-type signal) is located at residues 1 to 31 (MTLTRREFIKHSGIAAGALVVTSAAPLPAWA). Residue serine 176 participates in Mo-bis(molybdopterin guanine dinucleotide) binding.

The protein belongs to the prokaryotic molybdopterin-containing oxidoreductase family. Mo-bis(molybdopterin guanine dinucleotide) is required as a cofactor. In terms of processing, predicted to be exported by the Tat system. The position of the signal peptide cleavage has not been experimentally proven.

The protein resides in the periplasm. It carries out the reaction trimethylamine + 2 Fe(III)-[cytochrome c] + H2O = trimethylamine N-oxide + 2 Fe(II)-[cytochrome c] + 3 H(+). Reduces trimethylamine-N-oxide (TMAO) into trimethylamine; an anaerobic reaction coupled to energy-yielding reactions. Can also reduce other N- and S-oxide compounds such as 4-methylmorpholine-N-oxide and biotin sulfoxide (BSO), but with a lower catalytic efficiency. The polypeptide is Trimethylamine-N-oxide reductase 2 (torZ) (Escherichia coli O157:H7).